The primary structure comprises 116 residues: uncharacterized protein (116 aa).

The N-terminal stretch at 1 to 15 is a signal peptide; the sequence is MKKYFLILASFMLVA.

This is an uncharacterized protein from Haemophilus influenzae (strain ATCC 51907 / DSM 11121 / KW20 / Rd).